Reading from the N-terminus, the 299-residue chain is Aliphatic sulfonates import ATP-binding protein SsuB (299 aa).

The ABC transporter domain occupies 36–257; it reads LHVQQVIKRY…QHGSAAFAQI (222 aa). 68–75 provides a ligand contact to ATP; the sequence is GRSGCGKS.

Belongs to the ABC transporter superfamily. Aliphatic sulfonates importer (TC 3.A.1.17.2) family. As to quaternary structure, the complex is composed of two ATP-binding proteins (SsuB), two transmembrane proteins (SsuC) and a solute-binding protein (SsuA).

The protein localises to the cell inner membrane. The catalysed reaction is ATP + H2O + aliphatic sulfonate-[sulfonate-binding protein]Side 1 = ADP + phosphate + aliphatic sulfonateSide 2 + [sulfonate-binding protein]Side 1.. Part of the ABC transporter complex SsuABC involved in aliphatic sulfonates import. Responsible for energy coupling to the transport system. The polypeptide is Aliphatic sulfonates import ATP-binding protein SsuB (Cupriavidus pinatubonensis (strain JMP 134 / LMG 1197) (Cupriavidus necator (strain JMP 134))).